The chain runs to 138 residues: Ribosome-binding factor A (138 aa).

Residues methionine 1 to serine 20 show a composition bias toward low complexity. The interval methionine 1 to glutamine 21 is disordered.

The protein belongs to the RbfA family. In terms of assembly, monomer. Binds 30S ribosomal subunits, but not 50S ribosomal subunits or 70S ribosomes.

It is found in the cytoplasm. Functionally, one of several proteins that assist in the late maturation steps of the functional core of the 30S ribosomal subunit. Associates with free 30S ribosomal subunits (but not with 30S subunits that are part of 70S ribosomes or polysomes). Required for efficient processing of 16S rRNA. May interact with the 5'-terminal helix region of 16S rRNA. The chain is Ribosome-binding factor A from Granulibacter bethesdensis (strain ATCC BAA-1260 / CGDNIH1).